The chain runs to 260 residues: Eukaryotic translation initiation factor 3 subunit G-2 (260 aa).

Residues 180–258 (CAVRISNLSE…LILSVEWSKP (79 aa)) form the RRM domain.

Belongs to the eIF-3 subunit G family. As to quaternary structure, component of the eukaryotic translation initiation factor 3 (eIF-3) complex. The eIF-3 complex interacts with pix.

Its subcellular location is the cytoplasm. Functionally, RNA-binding component of the eukaryotic translation initiation factor 3 (eIF-3) complex, which is involved in protein synthesis of a specialized repertoire of mRNAs and, together with other initiation factors, stimulates binding of mRNA and methionyl-tRNAi to the 40S ribosome. The eIF-3 complex specifically targets and initiates translation of a subset of mRNAs involved in cell proliferation. This subunit can bind 18S rRNA. This chain is Eukaryotic translation initiation factor 3 subunit G-2, found in Drosophila grimshawi (Hawaiian fruit fly).